The following is a 126-amino-acid chain: Protein LLP homolog (126 aa).

Basic residues predominate over residues 1–21 (MAKSLRSKWRRKMRAEKRKKV). Disordered stretches follow at residues 1–22 (MAKS…KKVA) and 53–126 (VPPE…RLAW). Over residues 73-94 (DGGKMDLDTKRNKKTMLDEHGR) the composition is skewed to basic and acidic residues. The span at 103-126 (QAKKLKAKRVGKNGKPKPKKRLAW) shows a compositional bias: basic residues.

This sequence belongs to the learning-associated protein family.

It localises to the nucleus. The protein resides in the nucleolus. It is found in the chromosome. Its function is as follows. Regulates dendritic and spine growth and synaptic transmission. The polypeptide is Protein LLP homolog (llph) (Danio rerio (Zebrafish)).